A 404-amino-acid chain; its full sequence is XK-related protein 8 (404 aa).

The next 8 membrane-spanning stretches (helical) occupy residues phenylalanine 14–valine 34, phenylalanine 44–phenylalanine 64, alanine 167–tyrosine 187, serine 206–leucine 226, phenylalanine 227–valine 247, glycine 263–alanine 283, alanine 292–cysteine 312, and glutamate 319–phenylalanine 339.

This sequence belongs to the XK family.

The protein localises to the cell membrane. It carries out the reaction a 1,2-diacyl-sn-glycero-3-phospho-L-serine(in) = a 1,2-diacyl-sn-glycero-3-phospho-L-serine(out). In terms of biological role, phospholipid scramblase that promotes phosphatidylserine exposure on apoptotic cell surface, possibly by mediating phospholipid scrambling. Phosphatidylserine is a specific marker only present at the surface of apoptotic cells and acts as a specific signal for engulfment. This chain is XK-related protein 8, found in Tetraodon nigroviridis (Spotted green pufferfish).